The primary structure comprises 434 residues: AT-rich interactive domain-containing protein 5 (434 aa).

The tract at residues 1 to 120 (MMADTEMQEQ…SSPHVPEESV (120 aa)) is disordered. Basic and acidic residues-rich tracts occupy residues 25-37 (ELEK…ERPK), 43-54 (DTTHTLDSDVHL), and 78-90 (RNGD…KKIT). The segment covering 92–102 (DGGQEETTLGE) has biased composition (polar residues). Residues 142–233 (PQDQEAFIKE…ALLEYEKHLR (92 aa)) form the ARID domain. Residues 237–274 (ELNLPGSASLPSSGIEKEASSHQASGSGRTRRDAAARA) are disordered. Residues 336-434 (AEVIDVGPPA…RLFVRVPFEQ (99 aa)) enclose the sHSP domain.

The protein belongs to the small heat shock protein (HSP20) family.

The protein localises to the nucleus. This is AT-rich interactive domain-containing protein 5 (ARID5) from Arabidopsis thaliana (Mouse-ear cress).